A 99-amino-acid chain; its full sequence is Plastocyanin (99 aa).

In terms of domain architecture, Plastocyanin-like spans 1 to 99 (LDVLLGGDDG…AGMVGKVTVN (99 aa)). Cu cation contacts are provided by H37, C84, H87, and M92.

This sequence belongs to the plastocyanin family. It depends on Cu(2+) as a cofactor.

The protein localises to the plastid. It is found in the chloroplast thylakoid membrane. In terms of biological role, participates in electron transfer between P700 and the cytochrome b6-f complex in photosystem I. This is Plastocyanin (PETE) from Solanum tuberosum (Potato).